The sequence spans 32 residues: Conotoxin sr7a (32 aa).

3 disulfide bridges follow: C1-C17, C8-C21, and C16-C31. Serine amide is present on S32.

Expressed by the venom duct.

The protein localises to the secreted. Elicits hyperactivity when injected intracranially into mice and produces paralysis when injected into the pedal muscle of freshwater snails, Pomacea paludosa, but it has no apparent effect after intramuscular injection into the limpet Patella opea or the freshwater fish Lebistes reticulatus. The polypeptide is Conotoxin sr7a (Conus spurius (Alphabet cone)).